A 2255-amino-acid chain; its full sequence is Non-reducing polyketide synthase nvfA (2255 aa).

The interval Ile13–Glu251 is N-terminal acylcarrier protein transacylase domain (SAT). One can recognise a Ketosynthase family 3 (KS3) domain in the interval Val365 to Gln781. Catalysis depends on for beta-ketoacyl synthase activity residues Cys530, His665, and His704. The interval Leu887–Ala1187 is malonyl-CoA:ACP transacylase (MAT) domain. Ser974 (for acyl/malonyl transferase activity) is an active-site residue. An N-terminal hotdog fold region spans residues Glu1229–Ser1357. The 308-residue stretch at Glu1229 to Thr1536 folds into the PKS/mFAS DH domain. The tract at residues Gly1232–Leu1535 is product template (PT) domain. The active-site Proton acceptor; for dehydratase activity is the His1262. The C-terminal hotdog fold stretch occupies residues Ser1385–Thr1536. Residue Asp1443 is the Proton donor; for dehydratase activity of the active site. Residues Thr1581–Ala1655 form the Carrier domain. O-(pantetheine 4'-phosphoryl)serine is present on Ser1615. Residues His1809–Asn2042 are methyltransferase (CMeT) domain. The thioesterase (TE) domain stretch occupies residues Leu2109–Tyr2227. Ser2194 (for thioesterase activity) is an active-site residue.

It carries out the reaction 3 malonyl-CoA + acetyl-CoA + 2 S-adenosyl-L-methionine = 3,5-dimethylorsellinate + 2 S-adenosyl-L-homocysteine + 3 CO2 + 4 CoA. The protein operates within secondary metabolite biosynthesis; terpenoid biosynthesis. Its function is as follows. Non-reducing polyketide synthase; part of the gene cluster that mediates the biosynthesis of novofumigatonin, a heavily oxygenated meroterpenoid containing a unique orthoester moiety. The first step of the pathway is the synthesis of 3,5-dimethylorsellinic acid (DMOA) by the polyketide synthase nvfA via condensation of one acetyl-CoA starter unit with 3 malonyl-CoA units and 2 methylations. DMOA is then converted to farnesyl-DMOA by the farnesyltransferase nvfB. Epoxydation by FAD-dependent monooxygenase nvfK, followed by a protonation-initiated cyclization catalyzed by the terpene cyclase nvfL leads to the production of asnavolin H. The short chain dehydrogenase nvfC then as a 3-OH dehydrogenase of asnovolin H to yield chemesin D. There are two branches to synthesize asnovolin A from chemesin D. In one branch, chemesin D undergoes Baeyer-Villiger oxidation by nvfH, methylation by nvfJ, and enoyl reduction by the nvfM D enoylreductase that reduces the double bond between C-5'and C-6', to form respectively asnovolin I, asnovolin K, and asnovolin A. In the other branch, the methylation precedes the Baeyer-Villiger oxidation and the enoyl reduction to yield asnovolin A via the asnovolin J intermediate. Asnovolin A is further converted to fumigatonoid A by the Fe(II)/2-oxoglutarate-dependent dioxygenase nvfI that catalyzes an endoperoxidation reaction. The alpha/beta hydrolase nvfD then acts as an epimerase that converts fumigatonoid A to its C-5' epimer, which then undergoes spontaneous or nvfD-catalyzed lactonization. The following step utilizes the ketoreductase nvfG to produce fumigatonoid B. The dioxygenase nvfE further converts fumigatonoid B into fumigatonoid C. Finally the Fe(II)/2-oxoglutarate-dependent dioxygenase nvfF catalyzes two rounds of oxidation to transform fumigatonoid C into the end product, novofumigatonin A. The chain is Non-reducing polyketide synthase nvfA from Aspergillus novofumigatus (strain IBT 16806).